Reading from the N-terminus, the 164-residue chain is Peptidyl-prolyl cis-trans isomerase A (164 aa).

Met-1 bears the N-acetylmethionine mark. Val-2 carries the N-acetylvaline; in Peptidyl-prolyl cis-trans isomerase A, N-terminally processed modification. One can recognise a PPIase cyclophilin-type domain in the interval 7–163 (FFDIAVDGEP…KKITIADCGQ (157 aa)). Lys-28 bears the N6-acetyllysine; alternate mark. A Glycyl lysine isopeptide (Lys-Gly) (interchain with G-Cter in SUMO2); alternate cross-link involves residue Lys-28. Lys-28 participates in a covalent cross-link: Glycyl lysine isopeptide (Lys-Gly) (interchain with G-Cter in ubiquitin); alternate. N6-acetyllysine occurs at positions 44 and 76. Residue Ser-77 is modified to Phosphoserine. Lys-82 carries the post-translational modification N6-acetyllysine; alternate. A Glycyl lysine isopeptide (Lys-Gly) (interchain with G-Cter in SUMO2); alternate cross-link involves residue Lys-82. Thr-93 carries the post-translational modification Phosphothreonine. N-linked (GlcNAc...) asparagine glycosylation occurs at Asn-108. An N6-acetyllysine mark is found at Lys-125, Lys-131, and Lys-133.

This sequence belongs to the cyclophilin-type PPIase family. PPIase A subfamily. In terms of assembly, interacts with protein phosphatase PPP3CA/calcineurin A. Interacts with isoform 2 of BSG/CD147. Interacts with FOXO1; the interaction promotes FOXO1 dephosphorylation, nuclear accumulation and transcriptional activity. Interacts with integrin ITGA2B:ITGB3; the interaction is ROS and peptidyl-prolyl cis-trans isomerase (PPIase) activity-dependent and is increased in the presence of thrombin. Interacts with MAP3K5. Interacts with TARDBP; the interaction is dependent on the RNA-binding activity of TARDBP and the PPIase activity of PPIA/CYPA and the acetylation of PPIA/CYPA at Lys-125 favors the interaction. Interacts with HNRNPA1, HNRNPA2B1, HNRNPC, RBMX, HNRNPK and HNRNPM. Post-translationally, acetylation at Lys-125 markedly inhibits catalysis of cis to trans isomerization. PPIA acetylation also antagonizes the immunosuppressive effects of cyclosporine by inhibiting the sequential steps of cyclosporine binding and calcineurin inhibition. Acetylation at Lys-125 favors the interaction with TARDBP.

The protein resides in the cytoplasm. It localises to the secreted. Its subcellular location is the nucleus. It catalyses the reaction [protein]-peptidylproline (omega=180) = [protein]-peptidylproline (omega=0). With respect to regulation, binds cyclosporin A (CsA). CsA mediates some of its effects via an inhibitory action on PPIase. Functionally, catalyzes the cis-trans isomerization of proline imidic peptide bonds in oligopeptides. Exerts a strong chemotactic effect on leukocytes partly through activation of one of its membrane receptors BSG/CD147, initiating a signaling cascade that culminates in MAPK/ERK activation. Activates endothelial cells (ECs) in a proinflammatory manner by stimulating activation of NF-kappa-B and ERK, JNK and p38 MAP-kinases and by inducing expression of adhesion molecules including SELE and VCAM1. Induces apoptosis in ECs by promoting the FOXO1-dependent expression of CCL2 and BCL2L11 which are involved in EC chemotaxis and apoptosis. In response to oxidative stress, initiates proapoptotic and antiapoptotic signaling in ECs via activation of NF-kappa-B and AKT1 and up-regulation of antiapoptotic protein BCL2. Negatively regulates MAP3K5/ASK1 kinase activity, autophosphorylation and oxidative stress-induced apoptosis mediated by MAP3K5/ASK1. Necessary for the assembly of TARDBP in heterogeneous nuclear ribonucleoprotein (hnRNP) complexes and regulates TARDBP binding to RNA UG repeats and TARDBP-dependent expression of HDAC6, ATG7 and VCP which are involved in clearance of protein aggregates. Plays an important role in platelet activation and aggregation. Regulates calcium mobilization and integrin ITGA2B:ITGB3 bidirectional signaling via increased ROS production as well as by facilitating the interaction between integrin and the cell cytoskeleton. Binds heparan sulfate glycosaminoglycans. The protein is Peptidyl-prolyl cis-trans isomerase A (PPIA) of Saguinus oedipus (Cotton-top tamarin).